A 515-amino-acid polypeptide reads, in one-letter code: Fibril protein (515 aa).

A Blocked amino end (Met) modification is found at methionine 1. Helical regions lie at residues 21 to 34, 206 to 228, 357 to 376, and 426 to 440; these read VKKY…IQHV, HKFK…FNLL, KIET…AEKC, and SNEF…LKDV.

It is found in the cytoplasm. The protein resides in the cytoskeleton. In terms of biological role, acts as a cytoskeletal structure involved in the shape and motility of spiroplasmas. This is Fibril protein from Spiroplasma citri.